We begin with the raw amino-acid sequence, 254 residues long: Myeloblastin (254 aa).

An N-terminal signal peptide occupies residues 1–27; sequence MSGSYPSPKGIHPFLLLALVVGGAVQA. The propeptide occupies 28–29; it reads SK. The Peptidase S1 domain occupies 30 to 250; the sequence is IVGGHEARPH…YVDWIQNVLR (221 aa). Cys58 and Cys74 form a disulfide bridge. Residues His73 and Asp120 each act as charge relay system in the active site. Residues Asn127 and Asn176 are each glycosylated (N-linked (GlcNAc...) asparagine). 3 disulfide bridges follow: Cys154–Cys211, Cys184–Cys190, and Cys201–Cys226. Ser205 serves as the catalytic Charge relay system. A propeptide spanning residues 251–254 is cleaved from the precursor; the sequence is GAEP.

Belongs to the peptidase S1 family. Elastase subfamily. In terms of assembly, may form dimers. Interacts with CD177; the interaction tethers PRTN3 to the cell surface; the interaction is direct. Interacts with SERPINB1. Interacts with ADGRG3.

The protein localises to the lysosome. It is found in the secreted. It localises to the cell membrane. Its subcellular location is the membrane raft. The enzyme catalyses Hydrolysis of proteins, including elastin, by preferential cleavage: -Ala-|-Xaa- &gt; -Val-|-Xaa-.. In terms of biological role, serine protease that degrades elastin, fibronectin, laminin, vitronectin, and collagen types I, III, and IV (in vitro). By cleaving and activating receptor F2RL1/PAR-2, enhances endothelial cell barrier function and thus vascular integrity during neutrophil transendothelial migration. May play a role in neutrophil transendothelial migration, probably when associated with CD177. Triggers inflammatory processes in neutrophils by interacting with ADGRG3 upstream of F2RL1/PAR2 activation. This chain is Myeloblastin (Prtn3), found in Mus musculus (Mouse).